A 408-amino-acid chain; its full sequence is Apoptosis-inducing factor homolog A (408 aa).

Residues 34–38, R69, and D314 each bind FAD; that span reads GCGFG.

This sequence belongs to the FAD-dependent oxidoreductase family. The cofactor is FAD.

In terms of biological role, putative FAD-dependent oxidoreductase. This Dictyostelium discoideum (Social amoeba) protein is Apoptosis-inducing factor homolog A (aifA).